The chain runs to 589 residues: V-type ATP synthase alpha chain (589 aa).

ATP is bound at residue 232-239; the sequence is GPFGSGKT.

It belongs to the ATPase alpha/beta chains family.

The enzyme catalyses ATP + H2O + 4 H(+)(in) = ADP + phosphate + 5 H(+)(out). Functionally, produces ATP from ADP in the presence of a proton gradient across the membrane. The V-type alpha chain is a catalytic subunit. This Acetivibrio thermocellus (strain ATCC 27405 / DSM 1237 / JCM 9322 / NBRC 103400 / NCIMB 10682 / NRRL B-4536 / VPI 7372) (Clostridium thermocellum) protein is V-type ATP synthase alpha chain.